The chain runs to 372 residues: MNLSSLPHRLLAAAVALCAIAAPASAERIKDLAQVGGVRGNALVGYGLVVGLDGSGDRTSQAPFTVQSLKNLLGELGVNVPANVNPQLKNVAAVAIHAELPPFAKPGQPIDITVSSIANAVSLRGGSLLMAPLKGADGQVYAMAQGNLVVGGFGAQGKDGSRVSVNIPSVGRIPNGATVERALPDVFAGSGEITLNLHQNDFTTVSRMVAAIDNSFGAGTARAVDGVTVSVRSPTDPSARIGLLARLENVELSPGDAPAKVVVNARTGTVVIGQLVRVMPAAIAHGSLTVTISENTNVSQPGAFSGGRTAVTPQSTIKATSEGSRMFKFEGGTTLDQIVRAVNEVGAAPGDLVAILEALKQAGALTAELEVI.

The N-terminal stretch at 1-26 (MNLSSLPHRLLAAAVALCAIAAPASA) is a signal peptide.

This sequence belongs to the FlgI family. The basal body constitutes a major portion of the flagellar organelle and consists of four rings (L,P,S, and M) mounted on a central rod.

It is found in the periplasm. It localises to the bacterial flagellum basal body. In terms of biological role, assembles around the rod to form the L-ring and probably protects the motor/basal body from shearing forces during rotation. The sequence is that of Flagellar P-ring protein from Xanthomonas campestris pv. campestris (strain ATCC 33913 / DSM 3586 / NCPPB 528 / LMG 568 / P 25).